An 86-amino-acid polypeptide reads, in one-letter code: Sugar transporter SemiSWEET (86 aa).

A run of 3 helical transmembrane segments spans residues 3–23, 37–57, and 61–81; these read PFLI…AYAP, ISLG…IYGL, and DAPL…ILVM. One can recognise a PQ-loop domain in the interval 6–63; the sequence is IKLIGFAAATCTTVAYAPQFIKVLKTRSARDISLGMFLVMVLGLALWLIYGLLSGDAP.

Homodimer. Homooligomer.

The protein resides in the cell membrane. Functionally, mediates sucrose transmembrane transport down a concentration gradient. The protein is Sugar transporter SemiSWEET of Bradyrhizobium diazoefficiens (strain JCM 10833 / BCRC 13528 / IAM 13628 / NBRC 14792 / USDA 110).